We begin with the raw amino-acid sequence, 413 residues long: Tyrosine--tRNA ligase (413 aa).

Residues 59–68 (PTAPDIHLGH) carry the 'HIGH' region motif. Residues 243–247 (KMSKS) carry the 'KMSKS' region motif. K246 is an ATP binding site. In terms of domain architecture, S4 RNA-binding spans 351 to 411 (LAIGQLLKQA…GKRRFARVTL (61 aa)).

The protein belongs to the class-I aminoacyl-tRNA synthetase family. TyrS type 2 subfamily. As to quaternary structure, homodimer.

The protein localises to the cytoplasm. It catalyses the reaction tRNA(Tyr) + L-tyrosine + ATP = L-tyrosyl-tRNA(Tyr) + AMP + diphosphate + H(+). Catalyzes the attachment of tyrosine to tRNA(Tyr) in a two-step reaction: tyrosine is first activated by ATP to form Tyr-AMP and then transferred to the acceptor end of tRNA(Tyr). The polypeptide is Tyrosine--tRNA ligase (Burkholderia thailandensis (strain ATCC 700388 / DSM 13276 / CCUG 48851 / CIP 106301 / E264)).